Consider the following 576-residue polypeptide: uncharacterized protein (576 aa).

Belongs to the chlamydial CPn_0065/CT_288/TC_0561 family.

This is an uncharacterized protein from Chlamydia pneumoniae (Chlamydophila pneumoniae).